Reading from the N-terminus, the 347-residue chain is S-adenosylmethionine:tRNA ribosyltransferase-isomerase (347 aa).

It belongs to the QueA family. As to quaternary structure, monomer.

Its subcellular location is the cytoplasm. It catalyses the reaction 7-aminomethyl-7-carbaguanosine(34) in tRNA + S-adenosyl-L-methionine = epoxyqueuosine(34) in tRNA + adenine + L-methionine + 2 H(+). It functions in the pathway tRNA modification; tRNA-queuosine biosynthesis. Transfers and isomerizes the ribose moiety from AdoMet to the 7-aminomethyl group of 7-deazaguanine (preQ1-tRNA) to give epoxyqueuosine (oQ-tRNA). The protein is S-adenosylmethionine:tRNA ribosyltransferase-isomerase of Pseudomonas aeruginosa (strain LESB58).